The sequence spans 223 residues: MGQKINPTGFRVGVIRDWDAKWFADKADYANQLHEDLRIRKYIEKNLADAAVDRIEIERSTKSRVDVSVHTAKPGMVIGKGGSEVEKLRTQLAKLTDRDEKGRSKRVFINIVEIKKPDLSAHLVGQQIAGDLERRVAFRRAMRGAIQRATRSGAKGIKVMVSGRLNGADIARIEQYTEGTVPLHTLRADIDYSWDEAMTAYGNLGIKTWIYRGDILPQKKNSK.

Residues 39–115 form the KH type-2 domain; the sequence is IRKYIEKNLA…RVFINIVEIK (77 aa).

It belongs to the universal ribosomal protein uS3 family. In terms of assembly, part of the 30S ribosomal subunit. Forms a tight complex with proteins S10 and S14.

Functionally, binds the lower part of the 30S subunit head. Binds mRNA in the 70S ribosome, positioning it for translation. The polypeptide is Small ribosomal subunit protein uS3 (Leuconostoc citreum (strain KM20)).